A 129-amino-acid chain; its full sequence is Lysozyme C (129 aa).

The C-type lysozyme domain maps to 1–129 (KVYGRCELAA…VSVWTRGCRL (129 aa)). 4 cysteine pairs are disulfide-bonded: Cys-6–Cys-127, Cys-30–Cys-115, Cys-64–Cys-80, and Cys-76–Cys-94. Residues Glu-35 and Asp-52 contribute to the active site.

Belongs to the glycosyl hydrolase 22 family. As to quaternary structure, monomer.

The protein localises to the secreted. The enzyme catalyses Hydrolysis of (1-&gt;4)-beta-linkages between N-acetylmuramic acid and N-acetyl-D-glucosamine residues in a peptidoglycan and between N-acetyl-D-glucosamine residues in chitodextrins.. Its function is as follows. Lysozymes have primarily a bacteriolytic function; those in tissues and body fluids are associated with the monocyte-macrophage system and enhance the activity of immunoagents. This chain is Lysozyme C (LYZ), found in Lophura leucomelanos (Kalij pheasant).